Reading from the N-terminus, the 382-residue chain is DNA replication and repair protein RecF (382 aa).

Residue 30–37 coordinates ATP; the sequence is GPNGHGKS.

This sequence belongs to the RecF family.

It is found in the cytoplasm. The RecF protein is involved in DNA metabolism; it is required for DNA replication and normal SOS inducibility. RecF binds preferentially to single-stranded, linear DNA. It also seems to bind ATP. The sequence is that of DNA replication and repair protein RecF from Magnetococcus marinus (strain ATCC BAA-1437 / JCM 17883 / MC-1).